Consider the following 342-residue polypeptide: Dihydroorotate dehydrogenase (quinone) (342 aa).

FMN is bound by residues 60–64 (AGFDK) and T84. K64 serves as a coordination point for substrate. Residue 109-113 (NRMGF) participates in substrate binding. The FMN site is built by N137 and N170. Residue N170 participates in substrate binding. S173 (nucleophile) is an active-site residue. Position 175 (N175) interacts with substrate. FMN is bound by residues K215 and T243. Residue 244–245 (NT) coordinates substrate. FMN-binding positions include G266, G295, and 316–317 (YT).

Belongs to the dihydroorotate dehydrogenase family. Type 2 subfamily. In terms of assembly, monomer. FMN serves as cofactor.

It is found in the cell membrane. The catalysed reaction is (S)-dihydroorotate + a quinone = orotate + a quinol. It participates in pyrimidine metabolism; UMP biosynthesis via de novo pathway; orotate from (S)-dihydroorotate (quinone route): step 1/1. Catalyzes the conversion of dihydroorotate to orotate with quinone as electron acceptor. This is Dihydroorotate dehydrogenase (quinone) from Halorhodospira halophila (strain DSM 244 / SL1) (Ectothiorhodospira halophila (strain DSM 244 / SL1)).